Consider the following 370-residue polypeptide: 3-dehydroquinate synthase (370 aa).

Residues 108–112, 132–133, K145, and K154 each bind NAD(+); these read GVIGD and TT. Zn(2+)-binding residues include E187, H249, and H267.

The protein belongs to the sugar phosphate cyclases superfamily. Dehydroquinate synthase family. It depends on Co(2+) as a cofactor. Requires Zn(2+) as cofactor. NAD(+) is required as a cofactor.

The protein resides in the cytoplasm. The enzyme catalyses 7-phospho-2-dehydro-3-deoxy-D-arabino-heptonate = 3-dehydroquinate + phosphate. It participates in metabolic intermediate biosynthesis; chorismate biosynthesis; chorismate from D-erythrose 4-phosphate and phosphoenolpyruvate: step 2/7. Its function is as follows. Catalyzes the conversion of 3-deoxy-D-arabino-heptulosonate 7-phosphate (DAHP) to dehydroquinate (DHQ). This Cereibacter sphaeroides (strain ATCC 17023 / DSM 158 / JCM 6121 / CCUG 31486 / LMG 2827 / NBRC 12203 / NCIMB 8253 / ATH 2.4.1.) (Rhodobacter sphaeroides) protein is 3-dehydroquinate synthase.